Consider the following 213-residue polypeptide: Probable nicotinate-nucleotide adenylyltransferase (213 aa).

The protein belongs to the NadD family.

The catalysed reaction is nicotinate beta-D-ribonucleotide + ATP + H(+) = deamido-NAD(+) + diphosphate. It participates in cofactor biosynthesis; NAD(+) biosynthesis; deamido-NAD(+) from nicotinate D-ribonucleotide: step 1/1. In terms of biological role, catalyzes the reversible adenylation of nicotinate mononucleotide (NaMN) to nicotinic acid adenine dinucleotide (NaAD). This Shigella boydii serotype 4 (strain Sb227) protein is Probable nicotinate-nucleotide adenylyltransferase.